The primary structure comprises 1242 residues: ATP-dependent helicase/nuclease subunit A (1242 aa).

In terms of domain architecture, UvrD-like helicase ATP-binding spans 13–486 (SQWTDDQWKA…IDLAKNFRSR (474 aa)). Residue 34 to 41 (AAAGSGKT) participates in ATP binding. The UvrD-like helicase C-terminal domain occupies 506 to 806 (GEIEYDADAE…RIMTIHKSKG (301 aa)).

Belongs to the helicase family. AddA subfamily. As to quaternary structure, heterodimer of AddA and AddB/RexB. It depends on Mg(2+) as a cofactor.

The enzyme catalyses Couples ATP hydrolysis with the unwinding of duplex DNA by translocating in the 3'-5' direction.. The catalysed reaction is ATP + H2O = ADP + phosphate + H(+). Functionally, the heterodimer acts as both an ATP-dependent DNA helicase and an ATP-dependent, dual-direction single-stranded exonuclease. Recognizes the chi site generating a DNA molecule suitable for the initiation of homologous recombination. The AddA nuclease domain is required for chi fragment generation; this subunit has the helicase and 3' -&gt; 5' nuclease activities. The protein is ATP-dependent helicase/nuclease subunit A of Bacillus cytotoxicus (strain DSM 22905 / CIP 110041 / 391-98 / NVH 391-98).